The following is a 357-amino-acid chain: DNA polymerase IV (357 aa).

Positions 4–185 (IIHVDMDCYF…LSLRQIPGVG (182 aa)) constitute a UmuC domain. Mg(2+) contacts are provided by aspartate 8 and aspartate 103. Glutamate 104 is a catalytic residue.

The protein belongs to the DNA polymerase type-Y family. In terms of assembly, monomer. It depends on Mg(2+) as a cofactor.

The protein resides in the cytoplasm. The catalysed reaction is DNA(n) + a 2'-deoxyribonucleoside 5'-triphosphate = DNA(n+1) + diphosphate. Functionally, poorly processive, error-prone DNA polymerase involved in untargeted mutagenesis. Copies undamaged DNA at stalled replication forks, which arise in vivo from mismatched or misaligned primer ends. These misaligned primers can be extended by PolIV. Exhibits no 3'-5' exonuclease (proofreading) activity. May be involved in translesional synthesis, in conjunction with the beta clamp from PolIII. The chain is DNA polymerase IV from Shewanella oneidensis (strain ATCC 700550 / JCM 31522 / CIP 106686 / LMG 19005 / NCIMB 14063 / MR-1).